The following is a 101-amino-acid chain: Small ribosomal subunit protein uS14 (101 aa).

Residues 1 to 21 (MAKTSAVEKNKRRRKSVAQQA) form a disordered region.

Belongs to the universal ribosomal protein uS14 family. As to quaternary structure, part of the 30S ribosomal subunit. Contacts proteins S3 and S10.

Functionally, binds 16S rRNA, required for the assembly of 30S particles and may also be responsible for determining the conformation of the 16S rRNA at the A site. The polypeptide is Small ribosomal subunit protein uS14 (Agrobacterium fabrum (strain C58 / ATCC 33970) (Agrobacterium tumefaciens (strain C58))).